Here is a 571-residue protein sequence, read N- to C-terminus: Dihydroxy-acid dehydratase (571 aa).

Cys-56 contributes to the [2Fe-2S] cluster binding site. Asp-88 is a Mg(2+) binding site. Residue Cys-129 participates in [2Fe-2S] cluster binding. Positions 130 and 131 each coordinate Mg(2+). Position 131 is an N6-carboxylysine (Lys-131). Cys-201 is a binding site for [2Fe-2S] cluster. Glu-452 is a binding site for Mg(2+). Catalysis depends on Ser-478, which acts as the Proton acceptor.

This sequence belongs to the IlvD/Edd family. Homodimer. It depends on [2Fe-2S] cluster as a cofactor. Mg(2+) serves as cofactor.

It carries out the reaction (2R)-2,3-dihydroxy-3-methylbutanoate = 3-methyl-2-oxobutanoate + H2O. The enzyme catalyses (2R,3R)-2,3-dihydroxy-3-methylpentanoate = (S)-3-methyl-2-oxopentanoate + H2O. Its pathway is amino-acid biosynthesis; L-isoleucine biosynthesis; L-isoleucine from 2-oxobutanoate: step 3/4. The protein operates within amino-acid biosynthesis; L-valine biosynthesis; L-valine from pyruvate: step 3/4. Functions in the biosynthesis of branched-chain amino acids. Catalyzes the dehydration of (2R,3R)-2,3-dihydroxy-3-methylpentanoate (2,3-dihydroxy-3-methylvalerate) into 2-oxo-3-methylpentanoate (2-oxo-3-methylvalerate) and of (2R)-2,3-dihydroxy-3-methylbutanoate (2,3-dihydroxyisovalerate) into 2-oxo-3-methylbutanoate (2-oxoisovalerate), the penultimate precursor to L-isoleucine and L-valine, respectively. This chain is Dihydroxy-acid dehydratase, found in Streptococcus mutans serotype c (strain ATCC 700610 / UA159).